Reading from the N-terminus, the 372-residue chain is tRNA pseudouridine synthase D (372 aa).

The active-site Nucleophile is Asp-85. Residues 160-330 (GFTNYFGYQR…MQGSRRFMWG (171 aa)) enclose the TRUD domain.

The protein belongs to the pseudouridine synthase TruD family.

It catalyses the reaction uridine(13) in tRNA = pseudouridine(13) in tRNA. Responsible for synthesis of pseudouridine from uracil-13 in transfer RNAs. The protein is tRNA pseudouridine synthase D of Campylobacter jejuni subsp. jejuni serotype O:23/36 (strain 81-176).